Here is a 204-residue protein sequence, read N- to C-terminus: LexA repressor (204 aa).

Residues 31 to 51 (VREICAKVGLSSTSTVHGHLS) constitute a DNA-binding region (H-T-H motif). Residues serine 128 and lysine 165 each act as for autocatalytic cleavage activity in the active site.

It belongs to the peptidase S24 family. Homodimer.

The catalysed reaction is Hydrolysis of Ala-|-Gly bond in repressor LexA.. In terms of biological role, represses a number of genes involved in the response to DNA damage (SOS response), including recA and lexA. In the presence of single-stranded DNA, RecA interacts with LexA causing an autocatalytic cleavage which disrupts the DNA-binding part of LexA, leading to derepression of the SOS regulon and eventually DNA repair. The polypeptide is LexA repressor (Clostridium acetobutylicum (strain ATCC 824 / DSM 792 / JCM 1419 / IAM 19013 / LMG 5710 / NBRC 13948 / NRRL B-527 / VKM B-1787 / 2291 / W)).